The following is a 337-amino-acid chain: uncharacterized protein (337 aa).

In terms of domain architecture, F-box spans 12–60; sequence SLNYVDLPDTVHRKIFEYLNPWEIFKLSRISKAIHVTILKNKKFAVKDI.

This is an uncharacterized protein from Caenorhabditis elegans.